A 370-amino-acid polypeptide reads, in one-letter code: 5-hydroxytryptamine receptor 5B (370 aa).

Residues Met1 to Pro36 form a disordered region. At Met1–Phe48 the chain is on the extracellular side. N-linked (GlcNAc...) asparagine glycosylation occurs at Asn5. A compositionally biased stretch (low complexity) spans Glu20–Pro36. Residues Ser49–Val75 traverse the membrane as a helical segment. The Cytoplasmic portion of the chain corresponds to Thr76 to His88. The chain crosses the membrane as a helical span at residues Asn89–Ser115. Residues Ala116–Cys127 lie on the Extracellular side of the membrane. Residues Cys127 and Cys205 are joined by a disulfide bond. A helical membrane pass occupies residues His128–Leu150. Position 134 (Asp134) interacts with serotonin. At Asp151–Ser168 the chain is on the cytoplasmic side. The helical transmembrane segment at Arg169–Pro189 threads the bilayer. Over Leu190–Pro211 the chain is Extracellular. The helical transmembrane segment at Ser212–Tyr233 threads the bilayer. Residues Trp234–Val300 are Cytoplasmic-facing. The helical transmembrane segment at Gly301–Ala325 threads the bilayer. The Extracellular segment spans residues Cys326–Ser327. Residues Leu328–Thr352 form a helical membrane-spanning segment. Topologically, residues Ala353–Arg370 are cytoplasmic.

The protein belongs to the G-protein coupled receptor 1 family. In terms of tissue distribution, expressed predominantly in the central nervous system; in the hippocampus, habenula, and the doral raphe.

Its subcellular location is the cell membrane. In terms of biological role, G-protein coupled receptor for 5-hydroxytryptamine (serotonin), a biogenic hormone that functions as a neurotransmitter, a hormone and a mitogen. Also functions as a receptor for ergot alkaloid derivatives and other psychoactive substances. Ligand binding causes a conformation change that triggers signaling via guanine nucleotide-binding proteins (G proteins) and modulates the activity of downstream effectors. Htr5b is coupled to G(i)/G(o) G alpha proteins and mediates inhibitory neurotransmission: signaling inhibits adenylate cyclase activity and activates a phosphatidylinositol-calcium second messenger system that regulates the release of Ca(2+) ions from intracellular stores. This chain is 5-hydroxytryptamine receptor 5B, found in Mus musculus (Mouse).